The chain runs to 249 residues: 5'-nucleotidase SurE (249 aa).

Residues aspartate 9, aspartate 10, serine 40, and asparagine 92 each contribute to the a divalent metal cation site.

The protein belongs to the SurE nucleotidase family. It depends on a divalent metal cation as a cofactor.

The protein localises to the cytoplasm. The enzyme catalyses a ribonucleoside 5'-phosphate + H2O = a ribonucleoside + phosphate. Functionally, nucleotidase that shows phosphatase activity on nucleoside 5'-monophosphates. This chain is 5'-nucleotidase SurE, found in Shewanella putrefaciens (strain CN-32 / ATCC BAA-453).